Reading from the N-terminus, the 64-residue chain is Large ribosomal subunit protein bL33 (64 aa).

Belongs to the bacterial ribosomal protein bL33 family.

The chain is Large ribosomal subunit protein bL33 from Synechococcus sp. (strain WH7803).